The sequence spans 201 residues: Putative lipoprotein LppC (201 aa).

Positions 1-23 are cleaved as a signal peptide; the sequence is MTSTLHRTPLATAGLALVVALGG. The N-palmitoyl cysteine moiety is linked to residue C24. C24 is lipidated: S-diacylglycerol cysteine. 3 prevents bacterial uptake by a human macrophage-like cell line regions span residues 77 to 96, 97 to 116, and 117 to 136; these read GANVAPPLTWSSPAGAAELA, LVVDDPDAVGGLYVHWIVTG, and IAPGSGSTADGQTPAGGHSV. Residues 122 to 141 are disordered; it reads GSTADGQTPAGGHSVPNSGG.

It belongs to the UPF0098 family.

The protein resides in the cell membrane. The protein localises to the cell surface. Probably involved in bacterial recognition and uptake by its host (human). This is Putative lipoprotein LppC from Mycobacterium tuberculosis (strain ATCC 25618 / H37Rv).